A 33-amino-acid chain; its full sequence is Dolabellanin-B2 (33 aa).

Contains two disulfide bonds. In terms of processing, up to two of the methionines may be oxidized to methionine sulfoxides.

It is found in the secreted. Has antibacterial activity against Gram-negative bacteria E.coli JM109 and DH5-alpha, H.influenza IID 983, and V.vulnificus RIMD 2219009. Has antibacterial activity against Gram-positive bacteria S.aureus IID 1677, B.subtilis RIMD 0225014 and L.monocytogenes VIU206. Possesses antifungal activity against S.cerevisiae A581A, S.pombe IFO 1628, C.albicans ATCC 36232 and TIMM-1623, and C.tropicalis TIMM-0313. This Dolabella auricularia (Shoulderblade sea cat) protein is Dolabellanin-B2.